Here is a 459-residue protein sequence, read N- to C-terminus: Sulfide:quinone oxidoreductase, mitochondrial (459 aa).

The transit peptide at 1 to 24 (MLTLNSTIKSVTGSFQSASMLARF) directs the protein to the mitochondrion. 35–39 (GGGSA) lines the FAD pocket. Residues Cys204 and Cys383 each act as cysteine persulfide intermediate in the active site.

The protein belongs to the SQRD family. FAD is required as a cofactor.

It localises to the mitochondrion. In terms of biological role, catalyzes the oxidation of hydrogen sulfide, with the help of a quinone. The sequence is that of Sulfide:quinone oxidoreductase, mitochondrial (hmt2) from Schizosaccharomyces pombe (strain 972 / ATCC 24843) (Fission yeast).